Here is a 350-residue protein sequence, read N- to C-terminus: tRNA N6-adenosine threonylcarbamoyltransferase (350 aa).

2 residues coordinate Fe cation: histidine 109 and histidine 113. Substrate contacts are provided by residues 136–140 (TVSGG), aspartate 169, glycine 182, aspartate 186, and asparagine 284. Aspartate 312 contacts Fe cation.

Belongs to the KAE1 / TsaD family. It depends on Fe(2+) as a cofactor.

The protein localises to the cytoplasm. It carries out the reaction L-threonylcarbamoyladenylate + adenosine(37) in tRNA = N(6)-L-threonylcarbamoyladenosine(37) in tRNA + AMP + H(+). Its function is as follows. Required for the formation of a threonylcarbamoyl group on adenosine at position 37 (t(6)A37) in tRNAs that read codons beginning with adenine. Is involved in the transfer of the threonylcarbamoyl moiety of threonylcarbamoyl-AMP (TC-AMP) to the N6 group of A37, together with TsaE and TsaB. TsaD likely plays a direct catalytic role in this reaction. The sequence is that of tRNA N6-adenosine threonylcarbamoyltransferase from Chlorobium chlorochromatii (strain CaD3).